The chain runs to 1495 residues: Pregnancy zone protein (1495 aa).

The signal sequence occupies residues 1–24; the sequence is MRRNQLPTPAFLLLFLLLPRDATT. Cys48 and Cys86 form a disulfide bridge. 2 N-linked (GlcNAc...) asparagine glycosylation sites follow: Asn55 and Asn157. 2 cysteine pairs are disulfide-bonded: Cys249–Cys298 and Cys267–Cys286. 3 N-linked (GlcNAc...) asparagine glycosylation sites follow: Asn382, Asn405, and Asn412. Cys469 and Cys562 form a disulfide bridge. An N-linked (GlcNAc...) asparagine glycan is attached at Asn568. Intrachain disulfides connect Cys594–Cys783, Cys642–Cys689, Cys833–Cys861, Cys859–Cys895, Cys933–Cys1339, and Cys1092–Cys1140. Positions 686–744 are bait region; the sequence is PRFCQEFQHYPAMGGVAPQALAVAASGPGSSFRAMGVPMMGLDYSDEINQVVEVRETVR. Residues Asn881 and Asn942 are each glycosylated (N-linked (GlcNAc...) asparagine). Residues 984–987 constitute a cross-link (isoglutamyl cysteine thioester (Cys-Gln)); that stretch reads CGEQ. An N-linked (GlcNAc...) asparagine glycan is attached at Asn1003. Asn1385 and Asn1443 each carry an N-linked (GlcNAc...) asparagine glycan.

This sequence belongs to the protease inhibitor I39 (alpha-2-macroglobulin) family. Highest expression in liver, medium expression in ovary, heart and stomach. Low expression in lung, kidney and uterus. Protein found in plasma.

Its subcellular location is the secreted. Is able to inhibit all four classes of proteinases by a unique 'trapping' mechanism. This protein has a peptide stretch, called the 'bait region' which contains specific cleavage sites for different proteinases. When a proteinase cleaves the bait region, a conformational change is induced in the protein which traps the proteinase. The entrapped enzyme remains active against low molecular weight substrates (activity against high molecular weight substrates is greatly reduced). Following cleavage in the bait region, a thioester bond is hydrolyzed and mediates the covalent binding of the protein to the proteinase. The protein is Pregnancy zone protein (Pzp) of Mus musculus (Mouse).